Reading from the N-terminus, the 425-residue chain is Histidine--tRNA ligase (425 aa).

Belongs to the class-II aminoacyl-tRNA synthetase family. As to quaternary structure, homodimer.

The protein resides in the cytoplasm. It carries out the reaction tRNA(His) + L-histidine + ATP = L-histidyl-tRNA(His) + AMP + diphosphate + H(+). This is Histidine--tRNA ligase from Aeromonas hydrophila subsp. hydrophila (strain ATCC 7966 / DSM 30187 / BCRC 13018 / CCUG 14551 / JCM 1027 / KCTC 2358 / NCIMB 9240 / NCTC 8049).